Consider the following 92-residue polypeptide: MIAEFESRILALIDGMVDHASDDELFASGYLRGHLTLAIAELESGDDHSAQAVHTTVSQSLEKAIGAGELSPRDQALVTDMWENLFQQASQQ.

This is an uncharacterized protein from Escherichia coli (strain K12).